Reading from the N-terminus, the 312-residue chain is Protein-methionine-sulfoxide reductase catalytic subunit MsrP (312 aa).

A signal peptide (tat-type signal) is located at residues 1 to 42 (MALFRYPRPLPSEITPRDMYLSRRSLIGGAAALGAVSATADA). Residues asparagine 68, 71–72 (YE), cysteine 126, serine 161, asparagine 211, arginine 216, and 227–229 (GIK) contribute to the Mo-molybdopterin site.

It belongs to the MsrP family. Heterodimer of a catalytic subunit (MsrP) and a heme-binding subunit (MsrQ). It depends on Mo-molybdopterin as a cofactor. Post-translationally, predicted to be exported by the Tat system. The position of the signal peptide cleavage has not been experimentally proven.

It localises to the periplasm. The enzyme catalyses L-methionyl-[protein] + a quinone + H2O = L-methionyl-(S)-S-oxide-[protein] + a quinol. The catalysed reaction is L-methionyl-[protein] + a quinone + H2O = L-methionyl-(R)-S-oxide-[protein] + a quinol. Part of the MsrPQ system that repairs oxidized periplasmic proteins containing methionine sulfoxide residues (Met-O), using respiratory chain electrons. Thus protects these proteins from oxidative-stress damage caused by reactive species of oxygen and chlorine generated by the host defense mechanisms. MsrPQ is essential for the maintenance of envelope integrity under bleach stress, rescuing a wide series of structurally unrelated periplasmic proteins from methionine oxidation. The catalytic subunit MsrP is non-stereospecific, being able to reduce both (R-) and (S-) diastereoisomers of methionine sulfoxide. In Gluconobacter oxydans (strain 621H) (Gluconobacter suboxydans), this protein is Protein-methionine-sulfoxide reductase catalytic subunit MsrP.